Here is a 1506-residue protein sequence, read N- to C-terminus: Gag-Pol polyprotein (1506 aa).

CCHC-type zinc fingers lie at residues 385–402 (QKCYNCGKPGHLARQCRQ) and 404–421 (IICHHCGKRGHMQKDCRQ). The 72-residue stretch at 459 to 530 (KKLLVDTGAD…SPVEVLGRDN (72 aa)) folds into the Peptidase A2 domain. The Protease; shared with dimeric partner role is filled by Asp464. A Reverse transcriptase domain is found at 587–776 (EGKVGRAPPH…YPAKWLGFEL (190 aa)). Mg(2+) is bound by residues Asp652, Asp727, Asp728, Asp980, Glu1012, Asp1032, and Asp1085. Residues 971-1093 (VVPGPTYYTD…IDRYISEIFL (123 aa)) form the RNase H type-1 domain. The Integrase-type zinc-finger motif lies at 1228–1269 (ENIPLAEEEHNKWHQDAVSLHLEFGIPRTAAEDIVQQCDVCQ). Residues His1237, His1241, Cys1265, and Cys1268 each coordinate Zn(2+). Residues 1270-1430 (ENKMPSTLRG…SPMDIFIFNK (161 aa)) enclose the Integrase catalytic domain. Positions 1291, 1343, and 1379 each coordinate Mg(2+). A DNA-binding region (integrase-type) is located at residues 1447–1499 (RFCYYRTRKRGHPGEWQGPTQVLWGGDGAIVVKDRGTDRYLVIANKDVKFIPP).

It belongs to the retroviral Pol polyprotein family. In terms of assembly, homotetramer; further associates as a homohexadecamer. It depends on Mg(2+) as a cofactor. Post-translationally, specific enzymatic cleavages by the viral protease yield mature proteins.

It localises to the virion. The catalysed reaction is 3'-end directed exonucleolytic cleavage of viral RNA-DNA hybrid.. It carries out the reaction Endonucleolytic cleavage to 5'-phosphomonoester.. It catalyses the reaction dUTP + H2O = dUMP + diphosphate + H(+). The enzyme catalyses DNA(n) + a 2'-deoxyribonucleoside 5'-triphosphate = DNA(n+1) + diphosphate. Functionally, mediates, with Gag polyprotein, the essential events in virion assembly, including binding the plasma membrane, making the protein-protein interactions necessary to create spherical particles, recruiting the viral Env proteins, and packaging the genomic RNA via direct interactions with the RNA packaging sequence. Its function is as follows. Targets the polyprotein to the plasma membrane. Forms the core that encapsulates the genomic RNA-nucleocapsid complex in the virion. In terms of biological role, encapsulates and protects viral dimeric unspliced genomic RNA (gRNA). Binds these RNAs through its zinc fingers. Acts as a nucleic acid chaperone which is involved in rearrangement of nucleic acid secondary structure during gRNA retrotranscription. Also facilitates template switch leading to recombination. Functionally, the aspartyl protease mediates proteolytic cleavages of Gag and Gag-Pol polyproteins during or shortly after the release of the virion from the plasma membrane. Cleavages take place as an ordered, step-wise cascade to yield mature proteins. This process is called maturation. Displays maximal activity during the budding process just prior to particle release from the cell. Its function is as follows. RT is a multifunctional enzyme that converts the viral dimeric RNA genome into dsDNA in the cytoplasm, shortly after virus entry into the cell. This enzyme displays a DNA polymerase activity that can copy either DNA or RNA templates, and a ribonuclease H (RNase H) activity that cleaves the RNA strand of RNA-DNA heteroduplexes in a partially processive 3' to 5' endonucleasic mode. Conversion of viral genomic RNA into dsDNA requires many steps. A tRNA binds to the primer-binding site (PBS) situated at the 5' end of the viral RNA. RT uses the 3' end of the tRNA primer to perfom a short round of RNA-dependent minus-strand DNA synthesis. The reading proceeds through the U5 region and ends after the repeated (R) region which is present at both ends of viral RNA. The portion of the RNA-DNA heteroduplex is digested by the RNase H, resulting in a ssDNA product attached to the tRNA primer. This ssDNA/tRNA hybridizes with the identical R region situated at the 3' end of viral RNA. This template exchange, known as minus-strand DNA strong stop transfer, can be either intra- or intermolecular. RT uses the 3' end of this newly synthesized short ssDNA to perfom the RNA-dependent minus-strand DNA synthesis of the whole template. RNase H digests the RNA template except for a polypurine tract (PPT) situated at the 5' end of the genome. It is not clear if both polymerase and RNase H activities are simultaneous. RNase H probably can proceed both in a polymerase-dependent (RNA cut into small fragments by the same RT performing DNA synthesis) and a polymerase-independent mode (cleavage of remaining RNA fragments by free RTs). Secondly, RT performs DNA-directed plus-strand DNA synthesis using the PPT that has not been removed by RNase H as primers. PPT and tRNA primers are then removed by RNase H. The 3' and 5' ssDNA PBS regions hybridize to form a circular dsDNA intermediate. Strand displacement synthesis by RT to the PBS and PPT ends produces a blunt ended, linear dsDNA copy of the viral genome that includes long terminal repeats (LTRs) at both ends. Catalyzes viral DNA integration into the host chromosome, by performing a series of DNA cutting and joining reactions. The sequence is that of Gag-Pol polyprotein (pol) from Maedi visna virus (strain KV1772) (MVV).